A 1007-amino-acid polypeptide reads, in one-letter code: Serine/threonine-protein kinase PRP4 homolog (1007 aa).

The segment at 1 to 102 (MAATEPPSLR…LSPAKRTKLD (102 aa)) is disordered. Residue alanine 2 is modified to N-acetylalanine. Phosphoserine occurs at positions 8, 21, 24, and 33. Composition is skewed to basic residues over residues 40 to 60 (KHSRHKKKKHKHRSKHKKHKH) and 68 to 82 (KKHKHKHKHKKHKRK). The span at 83-92 (EVIEASDKEG) shows a compositional bias: basic and acidic residues. A phosphoserine mark is found at serine 88 and serine 94. N6-acetyllysine; alternate is present on lysine 100. Residue lysine 100 forms a Glycyl lysine isopeptide (Lys-Gly) (interchain with G-Cter in SUMO2); alternate linkage. Residue lysine 112 forms a Glycyl lysine isopeptide (Lys-Gly) (interchain with G-Cter in SUMO2) linkage. Lysine 118 is covalently cross-linked (Glycyl lysine isopeptide (Lys-Gly) (interchain with G-Cter in SUMO2); alternate). Residue lysine 118 forms a Glycyl lysine isopeptide (Lys-Gly) (interchain with G-Cter in SUMO1); alternate linkage. Residue serine 132 is modified to Phosphoserine. Tyrosine 141 is subject to Phosphotyrosine. Disordered regions lie at residues 141–535 (YESG…EDEE) and 560–583 (NISVPSEPSSPQSSTRSRSPSPDD). Residues serine 143, serine 145, and serine 167 each carry the phosphoserine modification. Positions 158-169 (GNRSSTRSSSTR) are enriched in low complexity. Residues lysine 171 and lysine 178 each participate in a glycyl lysine isopeptide (Lys-Gly) (interchain with G-Cter in SUMO2) cross-link. 2 stretches are compositionally biased toward basic residues: residues 180–203 (SAKKRSKSRSKERTRHRSDKRKSK) and 215–231 (RSKSKERRKSKSPSKRS). Serine 240, serine 242, serine 258, serine 278, serine 292, and serine 294 each carry phosphoserine. Over residues 248–271 (RSQEKVGKARSPAEEKMKSEEKGK) the composition is skewed to basic and acidic residues. Positions 294-303 (SPVDLRDKSK) are enriched in basic and acidic residues. Residues 304–315 (DRRSRSKERKSK) are compositionally biased toward basic residues. Basic and acidic residues predominate over residues 316 to 325 (RSEIDKEKKP). A phosphoserine mark is found at serine 328, serine 354, serine 356, serine 366, and serine 368. Basic residues predominate over residues 342-367 (PSRRPGRSPKRRSLSPKLRDKSRRSR). Threonine 385 carries the phosphothreonine modification. Serine 387 is modified (phosphoserine). Composition is skewed to basic and acidic residues over residues 395-408 (RSLERKRREPERRR) and 415-429 (RPRDDILGRCERSKD). Residues serine 427, serine 431, and serine 437 each carry the phosphoserine modification. The segment covering 438-497 (PTRRRSRSPIRRRSRSPLRRSRSPRRRSRSPRRRDRSRRSRSRLRRRSRSRGGHRRRSRS) has biased composition (basic residues). Serine 518, serine 519, serine 520, serine 565, serine 569, serine 576, serine 578, and serine 580 each carry phosphoserine. Acidic residues predominate over residues 518 to 535 (SSSDDNLEDFDVEEEDEE). Low complexity predominate over residues 562–581 (SVPSEPSSPQSSTRSRSPSP). Residues lysine 593 and lysine 659 each participate in a glycyl lysine isopeptide (Lys-Gly) (interchain with G-Cter in SUMO2) cross-link. The Protein kinase domain occupies 687-1006 (YNVYGYTGQG…ALQHAFIQEK (320 aa)). Residues 693 to 701 (TGQGVFSNV) and lysine 717 each bind ATP. Lysine 717 carries the post-translational modification N6-acetyllysine. Aspartate 815 functions as the Proton acceptor in the catalytic mechanism. Tyrosine 849 carries the phosphotyrosine modification. Serine 852 carries the post-translational modification Phosphoserine.

The protein belongs to the protein kinase superfamily. CMGC Ser/Thr protein kinase family. Interacts with CLK1 C-terminus. Associates with the U5 snRNP and NCOR1 deacetylase complexes. Identified in the spliceosome C complex. Phosphorylated by CLK1. Autophosphorylated; phosphorylation inhibits interaction with its targets, such as PRPF6 or SMARCA4.

It is found in the nucleus. Its subcellular location is the chromosome. The protein resides in the centromere. The protein localises to the kinetochore. The enzyme catalyses L-seryl-[protein] + ATP = O-phospho-L-seryl-[protein] + ADP + H(+). It catalyses the reaction L-threonyl-[protein] + ATP = O-phospho-L-threonyl-[protein] + ADP + H(+). Functionally, serine/threonine kinase involved in spliceosomal assembly as well as mitosis and signaling regulation. Connects chromatin mediated regulation of transcription and pre-mRNA splicing. During spliceosomal assembly, interacts with and phosphorylates PRPF6 and PRPF31, components of the U4/U6-U5 tri-small nuclear ribonucleoprotein (snRNP), to facilitate the formation of the spliceosome B complex. Plays a role in regulating transcription and the spindle assembly checkpoint (SAC). Associates with U5 snRNP and NCOR1 deacetylase complexes which may allow a coordination of pre-mRNA splicing with chromatin remodeling events involved in transcriptional regulation. Associates and probably phosphorylates SMARCA4 and NCOR1. Phosphorylates SRSF1. Associates with kinetochores during mitosis and is necessary for recruitment and maintenance of the checkpoint proteins such as MAD1L1 and MAD12L1 at the kinetochores. Phosphorylates and regulates the activity of the transcription factors such as ELK1 and KLF13. Phosphorylates nuclear YAP1 and WWTR1/TAZ which induces nuclear exclusion and regulates Hippo signaling pathway, involved in tissue growth control. In Mus musculus (Mouse), this protein is Serine/threonine-protein kinase PRP4 homolog (Prp4k).